We begin with the raw amino-acid sequence, 297 residues long: E3 ubiquitin-protein ligase TRIM52 (297 aa).

Residues 20-62 (CAICLDYFKDPVSISCGHNFCRGCVTQLWSKEDEEDQNEEEDE) form an RING-type; degenerate zinc finger. The important for rapid proteolytic degradation by the proteasome stretch occupies residues 72-167 (VGAMDGWDGS…DEDEDEELYP (96 aa)). The B box-type zinc-finger motif lies at 222–263 (NDQGMCFKHQEALKLFCEVDKEAICVVCRESRSHKQHSVLPL). Cys227, His230, Cys249, and His255 together coordinate Zn(2+).

This sequence belongs to the TRIM/RBCC family. As to quaternary structure, (Microbial infection) Interacts with Japanese encephalitis virus non-structural protein 2 (NS2A); mediates the ubiquitination of NS2A, targeting it for proteasome-mediated degradation. Autoubiquitinated. Polyubiquitinated. Undergoes extremely rapid proteolytic degradation by the proteasome.

It is found in the cytoplasm. It localises to the cytosol. Its subcellular location is the nucleus. The catalysed reaction is S-ubiquitinyl-[E2 ubiquitin-conjugating enzyme]-L-cysteine + [acceptor protein]-L-lysine = [E2 ubiquitin-conjugating enzyme]-L-cysteine + N(6)-ubiquitinyl-[acceptor protein]-L-lysine.. The protein operates within protein modification; protein ubiquitination. Its function is as follows. E3 ubiquitin-protein ligase. Positively regulates the NF-kappa-B signaling pathway. In terms of biological role, (Microbial infection) Exhibits antiviral activity against Japanese encephalitis virus (JEV). Ubiquitinates the viral non-structural protein 2 (NS2A) and targets it for proteasome-mediated degradation. The protein is E3 ubiquitin-protein ligase TRIM52 (TRIM52) of Homo sapiens (Human).